The primary structure comprises 441 residues: Deoxyguanosinetriphosphate triphosphohydrolase-like protein 1 (441 aa).

Residues R62 to G255 enclose the HD domain.

The protein belongs to the dGTPase family. Type 2 subfamily.

The chain is Deoxyguanosinetriphosphate triphosphohydrolase-like protein 1 from Vibrio cholerae serotype O1 (strain ATCC 39315 / El Tor Inaba N16961).